We begin with the raw amino-acid sequence, 347 residues long: Quinolinate synthase (347 aa).

Iminosuccinate-binding residues include His47 and Ser68. Residue Cys113 coordinates [4Fe-4S] cluster. Residues 139–141 (YAN) and Ser156 contribute to the iminosuccinate site. Cys200 serves as a coordination point for [4Fe-4S] cluster. Iminosuccinate contacts are provided by residues 226–228 (HPE) and Thr243. A [4Fe-4S] cluster-binding site is contributed by Cys297.

Belongs to the quinolinate synthase family. Type 1 subfamily. [4Fe-4S] cluster serves as cofactor.

It localises to the cytoplasm. It catalyses the reaction iminosuccinate + dihydroxyacetone phosphate = quinolinate + phosphate + 2 H2O + H(+). Its pathway is cofactor biosynthesis; NAD(+) biosynthesis; quinolinate from iminoaspartate: step 1/1. In terms of biological role, catalyzes the condensation of iminoaspartate with dihydroxyacetone phosphate to form quinolinate. The chain is Quinolinate synthase from Salmonella agona (strain SL483).